Here is a 465-residue protein sequence, read N- to C-terminus: Soluble pyridine nucleotide transhydrogenase (465 aa).

35 to 44 (ERYNNVGGGC) serves as a coordination point for FAD.

The protein belongs to the class-I pyridine nucleotide-disulfide oxidoreductase family. The cofactor is FAD.

The protein resides in the cytoplasm. The enzyme catalyses NAD(+) + NADPH = NADH + NADP(+). Functionally, conversion of NADPH, generated by peripheral catabolic pathways, to NADH, which can enter the respiratory chain for energy generation. In Photorhabdus laumondii subsp. laumondii (strain DSM 15139 / CIP 105565 / TT01) (Photorhabdus luminescens subsp. laumondii), this protein is Soluble pyridine nucleotide transhydrogenase.